A 228-amino-acid polypeptide reads, in one-letter code: UPF0758 protein SH1266 (228 aa).

Residues 102 to 224 enclose the MPN domain; the sequence is KITSPSDVSN…YASLVEEGYF (123 aa). Residues His173, His175, and Asp186 each contribute to the Zn(2+) site. Residues 173–186 carry the JAMM motif motif; that stretch reads HNHPSGDVTPSKED.

Belongs to the UPF0758 family.

The sequence is that of UPF0758 protein SH1266 from Staphylococcus haemolyticus (strain JCSC1435).